The primary structure comprises 320 residues: Polyisoprenyl-teichoic acid--peptidoglycan teichoic acid transferase TagU (320 aa).

Residues 1–15 (MVSRTERKQHKKRRK) are Cytoplasmic-facing. A helical; Signal-anchor for type II membrane protein membrane pass occupies residues 16–36 (WPFWLGGILLVLLLLISGGIF). At 37–320 (LIYNQVGAVV…SEITGHMQEQ (284 aa)) the chain is on the extracellular side.

This sequence belongs to the LytR/CpsA/Psr (LCP) family.

The protein localises to the cell membrane. It functions in the pathway cell wall biogenesis. In terms of biological role, may catalyze the final step in cell wall teichoic acid biosynthesis, the transfer of the anionic cell wall polymers (APs) from their lipid-linked precursor to the cell wall peptidoglycan (PG). This Oceanobacillus iheyensis (strain DSM 14371 / CIP 107618 / JCM 11309 / KCTC 3954 / HTE831) protein is Polyisoprenyl-teichoic acid--peptidoglycan teichoic acid transferase TagU.